A 226-amino-acid polypeptide reads, in one-letter code: UPF0758 protein SGO_1229 (226 aa).

One can recognise an MPN domain in the interval 103–225; that stretch reads RILSSQKLAK…YYSYREETDL (123 aa). 3 residues coordinate Zn(2+): histidine 174, histidine 176, and aspartate 187. Residues 174–187 carry the JAMM motif motif; sequence HNHPSGATRPSRDD.

This sequence belongs to the UPF0758 family.

In Streptococcus gordonii (strain Challis / ATCC 35105 / BCRC 15272 / CH1 / DL1 / V288), this protein is UPF0758 protein SGO_1229.